Here is a 162-residue protein sequence, read N- to C-terminus: UPF0102 protein Bpet0439 (162 aa).

Residues 15–52 (QAQQRQMKRRRAAAHRAARGPAPARAPRASPTQRTGTA) are disordered. The segment covering 20–32 (QMKRRRAAAHRAA) has biased composition (basic residues). The span at 33 to 48 (RGPAPARAPRASPTQR) shows a compositional bias: low complexity.

The protein belongs to the UPF0102 family.

This chain is UPF0102 protein Bpet0439, found in Bordetella petrii (strain ATCC BAA-461 / DSM 12804 / CCUG 43448).